The sequence spans 96 residues: Prokineticin Bm8-f (96 aa).

The first 19 residues, 1–19, serve as a signal peptide directing secretion; the sequence is MKCFAQIVVLLLVIAFSHG. 5 disulfides stabilise this stretch: cysteine 26-cysteine 38, cysteine 32-cysteine 50, cysteine 37-cysteine 78, cysteine 60-cysteine 86, and cysteine 80-cysteine 95.

This sequence belongs to the AVIT (prokineticin) family. Expressed by the skin glands.

Its subcellular location is the secreted. Potent agonist for both PKR1/PROKR1 and PKR2/PROKR2, and inducer of a potent and long-lasting hyperalgesia. Also potentiates capsaicin-induced TRPV1 current, when tested on DRG neurons. At subnanomolar concentrations, this protein both induces potent chemotaxis of macrophages and stimulates LPS-induced production of the pro-inflammatory cytokines IL-1 and IL-12. In vivo, potently stimulates the contraction of the guinea-pig gastrointestinal (GI) smooth muscle (nanomolar concentration). This Bombina maxima (Giant fire-bellied toad) protein is Prokineticin Bm8-f.